A 230-amino-acid chain; its full sequence is Cytidylate kinase (230 aa).

An ATP-binding site is contributed by 12–20 (GPSGAGKGT).

This sequence belongs to the cytidylate kinase family. Type 1 subfamily.

The protein resides in the cytoplasm. It carries out the reaction CMP + ATP = CDP + ADP. The catalysed reaction is dCMP + ATP = dCDP + ADP. This chain is Cytidylate kinase, found in Shewanella piezotolerans (strain WP3 / JCM 13877).